The primary structure comprises 460 residues: Chromosomal replication initiator protein DnaA (460 aa).

A domain I, interacts with DnaA modulators region spans residues 1-78 (MENFWQACSA…VPVEVQFVLD (78 aa)). Residues 78-123 (DPRLVAARRPAAQASVVSDRADDVPSNVLEPIPSNATDHTPRRDQS) are domain II. The interval 124-340 (RINTALTFDS…GALRKILAYS (217 aa)) is domain III, AAA+ region. 4 residues coordinate ATP: Gly168, Gly170, Lys171, and Thr172. A domain IV, binds dsDNA region spans residues 341–460 (RFHGKDITIE…LHVLEQTLKG (120 aa)).

This sequence belongs to the DnaA family. Oligomerizes as a right-handed, spiral filament on DNA at oriC.

It localises to the cytoplasm. Functionally, plays an essential role in the initiation and regulation of chromosomal replication. ATP-DnaA binds to the origin of replication (oriC) to initiate formation of the DNA replication initiation complex once per cell cycle. Binds the DnaA box (a 9 base pair repeat at the origin) and separates the double-stranded (ds)DNA. Forms a right-handed helical filament on oriC DNA; dsDNA binds to the exterior of the filament while single-stranded (ss)DNA is stabiized in the filament's interior. The ATP-DnaA-oriC complex binds and stabilizes one strand of the AT-rich DNA unwinding element (DUE), permitting loading of DNA polymerase. After initiation quickly degrades to an ADP-DnaA complex that is not apt for DNA replication. Binds acidic phospholipids. The protein is Chromosomal replication initiator protein DnaA of Herminiimonas arsenicoxydans.